The primary structure comprises 138 residues: Sporulation-specific protein 13 (138 aa).

Over residues 1–11 the composition is skewed to polar residues; the sequence is MMSNSQISKLF. The disordered stretch occupies residues 1-31; sequence MMSNSQISKLFSSISNKENSNENALKESTNK. A compositionally biased stretch (low complexity) spans 12-23; the sequence is SSISNKENSNEN. Residues 16–104 adopt a coiled-coil conformation; it reads NKENSNENAL…KRELDYLRAK (89 aa).

As to quaternary structure, interacts with spo2.

The protein resides in the cytoplasm. It localises to the cytoskeleton. The protein localises to the microtubule organizing center. It is found in the spindle pole body. In terms of biological role, involved in sporulation. Plays a significant role in modification of the spindle pole body prior to spore formation and is required for initiating forespore membrane formation. This is Sporulation-specific protein 13 (spo13) from Schizosaccharomyces pombe (strain 972 / ATCC 24843) (Fission yeast).